A 346-amino-acid polypeptide reads, in one-letter code: tRNA pseudouridine synthase D (346 aa).

Asp-81 functions as the Nucleophile in the catalytic mechanism. In terms of domain architecture, TRUD spans 157–303; the sequence is GVPNYFGLQR…MKHERRILRL (147 aa).

Belongs to the pseudouridine synthase TruD family.

The enzyme catalyses uridine(13) in tRNA = pseudouridine(13) in tRNA. Responsible for synthesis of pseudouridine from uracil-13 in transfer RNAs. This chain is tRNA pseudouridine synthase D, found in Stutzerimonas stutzeri (strain A1501) (Pseudomonas stutzeri).